Reading from the N-terminus, the 231-residue chain is Inner membrane protein YohK (231 aa).

Methionine 1 is a topological domain (periplasmic). A helical transmembrane segment spans residues 2 to 22; sequence MANIWWSLPLTLIVFFAARKL. At 23-29 the chain is on the cytoplasmic side; sequence AARYKFP. A helical transmembrane segment spans residues 30–50; that stretch reads LLNPLLVAMVVIIPFLMLTGI. Residues 51–90 lie on the Periplasmic side of the membrane; that stretch reads SYDSYFKGSEVLNDLLQPAVVALAYPLYEQLHQIRARWKS. A helical transmembrane segment spans residues 91–111; it reads IITICFIGSVVAMVTGTSVAL. Topologically, residues 112–118 are cytoplasmic; sequence LMGASPE. Helical transmembrane passes span 119–139 and 140–160; these read IAAS…VGGS and IGGI…LGAV. At 161–208 the chain is on the cytoplasmic side; the sequence is FGHTLLNAMRIRTKAARGLAMGTASHALGTARCAELDYQEGAFSSLAL. A helical transmembrane segment spans residues 209–229; the sequence is VLCGIITSLIAPFLFPIILAV. Over 230–231 the chain is Periplasmic; the sequence is MG.

Belongs to the YohK (E.coli)/YwbG (IPA-22R) (B.subtilis) family.

The protein localises to the cell inner membrane. In Escherichia coli (strain K12), this protein is Inner membrane protein YohK (yohK).